The chain runs to 190 residues: Protein A52 (190 aa).

Belongs to the orthopoxvirus A52R protein family. Interacts with host TRAF6 and IRAK2.

Its function is as follows. Bcl-2-like protein which targets host toll-like receptor signaling complexes to suppress innate immune response. Interacts with host TRAF6 to activate p38 and subsequently induce the expression of several cytokines such as IL-10. Also associates with host IRAK2 to inhibit NF-kappa-B signaling. The protein is Protein A52 of Vaccinia virus (strain Western Reserve) (VACV).